A 412-amino-acid polypeptide reads, in one-letter code: Serine hydroxymethyltransferase (412 aa).

(6S)-5,6,7,8-tetrahydrofolate-binding positions include L112 and 116–118 (GHL). K221 bears the N6-(pyridoxal phosphate)lysine mark. Residue E237 participates in (6S)-5,6,7,8-tetrahydrofolate binding.

It belongs to the SHMT family. In terms of assembly, homodimer. It depends on pyridoxal 5'-phosphate as a cofactor.

It is found in the cytoplasm. It catalyses the reaction (6R)-5,10-methylene-5,6,7,8-tetrahydrofolate + glycine + H2O = (6S)-5,6,7,8-tetrahydrofolate + L-serine. The protein operates within one-carbon metabolism; tetrahydrofolate interconversion. It participates in amino-acid biosynthesis; glycine biosynthesis; glycine from L-serine: step 1/1. In terms of biological role, catalyzes the reversible interconversion of serine and glycine with tetrahydrofolate (THF) serving as the one-carbon carrier. This reaction serves as the major source of one-carbon groups required for the biosynthesis of purines, thymidylate, methionine, and other important biomolecules. Also exhibits THF-independent aldolase activity toward beta-hydroxyamino acids, producing glycine and aldehydes, via a retro-aldol mechanism. This chain is Serine hydroxymethyltransferase, found in Malacoplasma penetrans (strain HF-2) (Mycoplasma penetrans).